The following is a 342-amino-acid chain: tRNA N6-adenosine threonylcarbamoyltransferase (342 aa).

The Fe cation site is built by His120 and His124. Residues 142–146 (VVSGG), Asp175, Gly188, Asp192, and Asn281 contribute to the substrate site. Asp310 lines the Fe cation pocket.

Belongs to the KAE1 / TsaD family. Fe(2+) is required as a cofactor.

It localises to the cytoplasm. The catalysed reaction is L-threonylcarbamoyladenylate + adenosine(37) in tRNA = N(6)-L-threonylcarbamoyladenosine(37) in tRNA + AMP + H(+). Functionally, required for the formation of a threonylcarbamoyl group on adenosine at position 37 (t(6)A37) in tRNAs that read codons beginning with adenine. Is involved in the transfer of the threonylcarbamoyl moiety of threonylcarbamoyl-AMP (TC-AMP) to the N6 group of A37, together with TsaE and TsaB. TsaD likely plays a direct catalytic role in this reaction. The protein is tRNA N6-adenosine threonylcarbamoyltransferase of Geobacillus thermodenitrificans (strain NG80-2).